We begin with the raw amino-acid sequence, 64 residues long: Delta-buthitoxin-Hj2a (64 aa).

Disulfide bonds link Cys12–Cys63, Cys16–Cys36, Cys22–Cys46, and Cys26–Cys48. Arg64 is subject to Arginine amide.

Belongs to the long (4 C-C) scorpion toxin superfamily. Sodium channel inhibitor family. Alpha subfamily. Expressed by the venom gland.

The protein resides in the secreted. Its function is as follows. This non-amidated recombinant toxin slows fast inactivation on Nav1.1/SCN1A (EC(50)=52.8 nM), Nav1.4/SN4A (EC(50)=32 nM), Nav1.5/SCN5A (EC(50)=116.7 nM), Nav1.6/SCN8A (EC(50)=46.3 nM), and Nav1.7/SCN9A (EC(50)=147.4 nM) voltage-gated sodium channels. On Nav1.1/SCN1A channel, acts as an agonist by inducing a shift in both the voltage dependence of channel inactivation (alpha-toxin activity) and activation (beta-toxin activity). This is Delta-buthitoxin-Hj2a from Hottentotta judaicus (Black scorpion).